We begin with the raw amino-acid sequence, 272 residues long: Putative pyruvate, phosphate dikinase regulatory protein 1 (272 aa).

151 to 158 serves as a coordination point for ADP; that stretch reads GISRTSKT.

This sequence belongs to the pyruvate, phosphate/water dikinase regulatory protein family. PDRP subfamily.

The catalysed reaction is N(tele)-phospho-L-histidyl/L-threonyl-[pyruvate, phosphate dikinase] + ADP = N(tele)-phospho-L-histidyl/O-phospho-L-threonyl-[pyruvate, phosphate dikinase] + AMP + H(+). It carries out the reaction N(tele)-phospho-L-histidyl/O-phospho-L-threonyl-[pyruvate, phosphate dikinase] + phosphate + H(+) = N(tele)-phospho-L-histidyl/L-threonyl-[pyruvate, phosphate dikinase] + diphosphate. Bifunctional serine/threonine kinase and phosphorylase involved in the regulation of the pyruvate, phosphate dikinase (PPDK) by catalyzing its phosphorylation/dephosphorylation. The protein is Putative pyruvate, phosphate dikinase regulatory protein 1 of Staphylococcus epidermidis (strain ATCC 35984 / DSM 28319 / BCRC 17069 / CCUG 31568 / BM 3577 / RP62A).